We begin with the raw amino-acid sequence, 190 residues long: Xanthine phosphoribosyltransferase (190 aa).

Xanthine is bound by residues Leu-20 and Asn-27. 128–132 (ANGHA) provides a ligand contact to 5-phospho-alpha-D-ribose 1-diphosphate. Lys-156 provides a ligand contact to xanthine.

The protein belongs to the purine/pyrimidine phosphoribosyltransferase family. Xpt subfamily. In terms of assembly, homodimer.

It is found in the cytoplasm. It catalyses the reaction XMP + diphosphate = xanthine + 5-phospho-alpha-D-ribose 1-diphosphate. The protein operates within purine metabolism; XMP biosynthesis via salvage pathway; XMP from xanthine: step 1/1. Functionally, converts the preformed base xanthine, a product of nucleic acid breakdown, to xanthosine 5'-monophosphate (XMP), so it can be reused for RNA or DNA synthesis. The sequence is that of Xanthine phosphoribosyltransferase from Ectopseudomonas mendocina (strain ymp) (Pseudomonas mendocina).